Consider the following 101-residue polypeptide: Gamma-secretase subunit PEN-2 (101 aa).

The Cytoplasmic portion of the chain corresponds to 1–17 (MNLERVSNEEKLNLCRK). An intramembrane region (helical) is located at residues 18–36 (YYLGGFAFLPFLWLVNIFW). The Cytoplasmic segment spans residues 37–57 (FFREAFLVPAYTEQSQIKGYV). Residues 58–78 (WRSAVGFLFWVIVLTSWITIF) form a helical membrane-spanning segment. Topologically, residues 79 to 101 (QIYRPRWGALGDYLSFTIPLGTP) are lumenal.

This sequence belongs to the PEN-2 family. In terms of assembly, the functional gamma-secretase complex is composed of at least four polypeptides: a presenilin homodimer (PSEN1 or PSEN2), nicastrin (NCSTN), APH1 (APH1A or APH1B) and PSENEN. In terms of tissue distribution, widely expressed. Expressed in leukocytes, lung, placenta, small intestine, liver, kidney, spleen thymus, skeletal muscle, heart and brain.

It is found in the endoplasmic reticulum membrane. The protein localises to the golgi apparatus. Its subcellular location is the golgi stack membrane. It localises to the cell membrane. The protein resides in the membrane. Its function is as follows. Essential subunit of the gamma-secretase complex, an endoprotease complex that catalyzes the intramembrane cleavage of integral membrane proteins such as Notch receptors and APP (amyloid-beta precursor protein). The gamma-secretase complex plays a role in Notch and Wnt signaling cascades and regulation of downstream processes via its role in processing key regulatory proteins, and by regulating cytosolic CTNNB1 levels. PSENEN modulates both endoproteolysis of presenilin and gamma-secretase activity. In Homo sapiens (Human), this protein is Gamma-secretase subunit PEN-2 (PSENEN).